A 633-amino-acid chain; its full sequence is Pesticidal crystal protein Cry2Aa (633 aa).

The protein belongs to the delta endotoxin family.

Promotes colloidosmotic lysis by binding to the midgut epithelial cells of both dipteran (Aedes aegypti) and lepidopteran (Manduca sexta) larvae. In Bacillus thuringiensis subsp. kenyae, this protein is Pesticidal crystal protein Cry2Aa (cry2Aa).